A 520-amino-acid chain; its full sequence is MLLFLLITLLSAIFIFAKRHYTQWQRLGLVSDEAVIPFGSLAKVFRKERPFGLVMYDLYEKFQEQVVGIYLFFKPALLIRDAELARQILTSDFNSFHDRGIYVDEKNDPMSANLFALEGQSWRTLRMKLTPSFSSGKLKGMFETVDDVGNKLLEYLNNQLKDGQTHVLDIKSILTTYAIDIIGSVIFGLEIDSFTNPDNEFRVLSDRSFDNESRSFLSKLQNLTNFVCPPIAKLLTRLGTKEPVVYRLRDIVKRTIEFREENNVVRKDLLHLLIQLRNTGKISDDNDNLWNKVESTATNLKAMSIDMIASNSFLFYIAGSETTASSTSFTIYELAMNPEALKKAQNEVDECLKKHGIKPDGRITYEAIQDMKYLDLCVKETTRKYPGLPFLNRQCTQDFKVPNSKFTIKKDTNVIISLLGLHRDAKYFPEPLAYKPERFADETKDYDAAAYMPFGEGPRHCIAQRMGVMNTKVALAKILANFNIEPMPHKEAEFQFNTAPVLVPVNGLRVGLSKRSFNRR.

C461 provides a ligand contact to heme.

It belongs to the cytochrome P450 family. Heme is required as a cofactor.

It localises to the endoplasmic reticulum membrane. The protein localises to the microsome membrane. Metabolizes pyrethroid insecticides and other xenobiotics. The sequence is that of Cytochrome P450 6d3 (CYP6D3) from Musca domestica (House fly).